Here is a 143-residue protein sequence, read N- to C-terminus: Mediator of RNA polymerase II transcription subunit 10 (143 aa).

The segment at 123–143 (GAHSNTEISTNPGQKRQGNVS) is disordered. Residues 124–143 (AHSNTEISTNPGQKRQGNVS) are compositionally biased toward polar residues.

The protein belongs to the Mediator complex subunit 10 family. As to quaternary structure, component of the Mediator complex.

The protein localises to the nucleus. Functionally, component of the Mediator complex, a coactivator involved in the regulated transcription of nearly all RNA polymerase II-dependent genes. Mediator functions as a bridge to convey information from gene-specific regulatory proteins to the basal RNA polymerase II transcription machinery. Mediator is recruited to promoters by direct interactions with regulatory proteins and serves as a scaffold for the assembly of a functional preinitiation complex with RNA polymerase II and the general transcription factors. The chain is Mediator of RNA polymerase II transcription subunit 10 (NUT2) from Yarrowia lipolytica (strain CLIB 122 / E 150) (Yeast).